Here is a 210-residue protein sequence, read N- to C-terminus: Probable membrane protein Rv1733c (210 aa).

The next 2 membrane-spanning stretches (helical) occupy residues 43–63 and 165–185; these read AVVMLLAVTVSLLTIPFAAAA and ALAALGLWLSVAAVAGALLAL.

Its subcellular location is the cell membrane. This is Probable membrane protein Rv1733c from Mycobacterium tuberculosis (strain ATCC 25618 / H37Rv).